The sequence spans 193 residues: Flagellar transcriptional regulator FlhC (193 aa).

Residues cysteine 138, cysteine 141, cysteine 158, and cysteine 161 each coordinate Zn(2+).

Belongs to the FlhC family. As to quaternary structure, heterohexamer composed of two FlhC and four FlhD subunits. Each FlhC binds a FlhD dimer, forming a heterotrimer, and a hexamer assembles by dimerization of two heterotrimers. Requires Zn(2+) as cofactor.

The protein localises to the cytoplasm. Functionally, functions in complex with FlhD as a master transcriptional regulator that regulates transcription of several flagellar and non-flagellar operons by binding to their promoter region. Activates expression of class 2 flagellar genes, including fliA, which is a flagellum-specific sigma factor that turns on the class 3 genes. Also regulates genes whose products function in a variety of physiological pathways. In Proteus mirabilis, this protein is Flagellar transcriptional regulator FlhC.